Consider the following 30-residue polypeptide: MKNLRNRSFLTLLDFSRQEVEFLLTLSEDL.

It belongs to the aspartate/ornithine carbamoyltransferase superfamily. OTCase family.

It localises to the cytoplasm. It catalyses the reaction carbamoyl phosphate + L-ornithine = L-citrulline + phosphate + H(+). It functions in the pathway amino-acid biosynthesis; L-arginine biosynthesis; L-arginine from L-ornithine and carbamoyl phosphate: step 1/3. Its function is as follows. Has vitronectin and fibronectin-binding activity. This Staphylococcus epidermidis protein is Ornithine carbamoyltransferase (argF).